We begin with the raw amino-acid sequence, 734 residues long: Photosystem I P700 chlorophyll a apoprotein A2 (734 aa).

The next 8 membrane-spanning stretches (helical) occupy residues 46-69, 135-158, 175-199, 273-291, 330-353, 369-395, 417-439, and 517-535; these read IFAS…FHVA, LYTG…LHLQ, LNHH…HVAI, MAHH…GHMY, IHFQ…QHMY, AALY…IFFI, AIIS…LYVH, and FLVH…LILV. Residues Cys-559 and Cys-568 each coordinate [4Fe-4S] cluster. The next 2 membrane-spanning stretches (helical) occupy residues 575 to 596 and 643 to 665; these read AFYL…YWHW and LSVW…MFLI. The chlorophyll a site is built by His-654, Met-662, and Tyr-670. Phylloquinone is bound at residue Trp-671. A helical transmembrane segment spans residues 707–727; it reads LVGLAHFSVGYIFTYAAFLIA.

This sequence belongs to the PsaA/PsaB family. In terms of assembly, the PsaA/B heterodimer binds the P700 chlorophyll special pair and subsequent electron acceptors. PSI consists of a core antenna complex that captures photons, and an electron transfer chain that converts photonic excitation into a charge separation. The eukaryotic PSI reaction center is composed of at least 11 subunits. The cofactor is P700 is a chlorophyll a/chlorophyll a' dimer, A0 is one or more chlorophyll a, A1 is one or both phylloquinones and FX is a shared 4Fe-4S iron-sulfur center..

Its subcellular location is the plastid. The protein resides in the chloroplast thylakoid membrane. It catalyses the reaction reduced [plastocyanin] + hnu + oxidized [2Fe-2S]-[ferredoxin] = oxidized [plastocyanin] + reduced [2Fe-2S]-[ferredoxin]. Functionally, psaA and PsaB bind P700, the primary electron donor of photosystem I (PSI), as well as the electron acceptors A0, A1 and FX. PSI is a plastocyanin-ferredoxin oxidoreductase, converting photonic excitation into a charge separation, which transfers an electron from the donor P700 chlorophyll pair to the spectroscopically characterized acceptors A0, A1, FX, FA and FB in turn. Oxidized P700 is reduced on the lumenal side of the thylakoid membrane by plastocyanin. In Lobularia maritima (Sweet alyssum), this protein is Photosystem I P700 chlorophyll a apoprotein A2.